The sequence spans 742 residues: Phosphoribosylformylglycinamidine synthase subunit PurL (742 aa).

His-54 is a catalytic residue. Residues Tyr-57 and Lys-96 each coordinate ATP. Glu-98 provides a ligand contact to Mg(2+). Substrate contacts are provided by residues 99–102 (SHNH) and Arg-121. The Proton acceptor role is filled by His-100. Residue Asp-122 participates in Mg(2+) binding. Residue Gln-245 coordinates substrate. Asp-273 is a Mg(2+) binding site. Residue 317-319 (ESQ) participates in substrate binding. 2 residues coordinate ATP: Asp-500 and Gly-537. Asn-538 provides a ligand contact to Mg(2+). Ser-540 serves as a coordination point for substrate.

It belongs to the FGAMS family. Monomer. Part of the FGAM synthase complex composed of 1 PurL, 1 PurQ and 2 PurS subunits.

The protein resides in the cytoplasm. The catalysed reaction is N(2)-formyl-N(1)-(5-phospho-beta-D-ribosyl)glycinamide + L-glutamine + ATP + H2O = 2-formamido-N(1)-(5-O-phospho-beta-D-ribosyl)acetamidine + L-glutamate + ADP + phosphate + H(+). The protein operates within purine metabolism; IMP biosynthesis via de novo pathway; 5-amino-1-(5-phospho-D-ribosyl)imidazole from N(2)-formyl-N(1)-(5-phospho-D-ribosyl)glycinamide: step 1/2. In terms of biological role, part of the phosphoribosylformylglycinamidine synthase complex involved in the purines biosynthetic pathway. Catalyzes the ATP-dependent conversion of formylglycinamide ribonucleotide (FGAR) and glutamine to yield formylglycinamidine ribonucleotide (FGAM) and glutamate. The FGAM synthase complex is composed of three subunits. PurQ produces an ammonia molecule by converting glutamine to glutamate. PurL transfers the ammonia molecule to FGAR to form FGAM in an ATP-dependent manner. PurS interacts with PurQ and PurL and is thought to assist in the transfer of the ammonia molecule from PurQ to PurL. The chain is Phosphoribosylformylglycinamidine synthase subunit PurL from Bacillus velezensis (strain DSM 23117 / BGSC 10A6 / LMG 26770 / FZB42) (Bacillus amyloliquefaciens subsp. plantarum).